A 255-amino-acid chain; its full sequence is Indole-3-glycerol phosphate synthase (255 aa).

Belongs to the TrpC family.

The enzyme catalyses 1-(2-carboxyphenylamino)-1-deoxy-D-ribulose 5-phosphate + H(+) = (1S,2R)-1-C-(indol-3-yl)glycerol 3-phosphate + CO2 + H2O. It functions in the pathway amino-acid biosynthesis; L-tryptophan biosynthesis; L-tryptophan from chorismate: step 4/5. The sequence is that of Indole-3-glycerol phosphate synthase from Streptococcus sanguinis (strain SK36).